A 280-amino-acid polypeptide reads, in one-letter code: Undecaprenyl-diphosphatase (280 aa).

The next 8 membrane-spanning stretches (helical) occupy residues 3–23 (IILL…EFLP), 45–65 (VDLF…YDYW), 88–108 (QLGL…FTFA), 115–135 (LFDP…IFYV), 150–170 (VGLK…IPGT), 191–211 (AEFS…LDLL), 225–245 (VLGI…RLLV), and 255–275 (IFAW…WGFG).

It belongs to the UppP family.

The protein localises to the cell inner membrane. It carries out the reaction di-trans,octa-cis-undecaprenyl diphosphate + H2O = di-trans,octa-cis-undecaprenyl phosphate + phosphate + H(+). Catalyzes the dephosphorylation of undecaprenyl diphosphate (UPP). Confers resistance to bacitracin. This is Undecaprenyl-diphosphatase from Psychrobacter arcticus (strain DSM 17307 / VKM B-2377 / 273-4).